Here is a 291-residue protein sequence, read N- to C-terminus: Transmembrane O-methyltransferase (291 aa).

Residues 31–51 (VGTMSPAIALAFLPLVVTLLV) traverse the membrane as a helical segment. S-adenosyl-L-methionine-binding positions include Glu-137, 139-140 (GT), Ser-145, Glu-163, and Ser-193.

Belongs to the class I-like SAM-binding methyltransferase superfamily. Cation-dependent O-methyltransferase family. As to quaternary structure, interacts with LHFPL5, PCDH15, TMC1, TMC2 and TMIE. Interacts directly with TMC1. The interaction of TOMT with TMC1 and TMC2 is required for the transportation of TMC1/2 into the stereocilia of hair cells.

Its subcellular location is the membrane. It is found in the cytoplasm. The protein localises to the endoplasmic reticulum. It carries out the reaction a catechol + S-adenosyl-L-methionine = a guaiacol + S-adenosyl-L-homocysteine + H(+). Functionally, catalyzes the O-methylation, and thereby the inactivation, of catecholamine neurotransmitters and catechol hormones. Required for auditory function. Component of the cochlear hair cell's mechanotransduction (MET) machinery. Involved in the assembly of the asymmetric tip-link MET complex. Required for transportation of TMC1 and TMC2 proteins into the mechanically sensitive stereocilia of the hair cells. The function in MET is independent of the enzymatic activity. This is Transmembrane O-methyltransferase from Pan troglodytes (Chimpanzee).